A 243-amino-acid chain; its full sequence is Max-interacting protein 1 (243 aa).

One can recognise a bHLH domain in the interval 76–128 (HYRSTHNELEKNRRAHLRLCLERLKTLIPLGPECSRHTTLGLLNKAKAHIKKL). A disordered region spans residues 164-235 (EAERIRTDSM…TASDEGYSSC (72 aa)). Over residues 188–198 (DQEEMEVDVES) the composition is skewed to acidic residues. A compositionally biased stretch (polar residues) spans 222–235 (SLQSTASDEGYSSC).

Efficient DNA binding requires dimerization with another bHLH protein. Binds DNA as a heterodimer with MAX.

It localises to the nucleus. Its function is as follows. Transcriptional repressor. MXI1 binds with MAX to form a sequence-specific DNA-binding protein complex which recognizes the core sequence 5'-CAC[GA]TG-3'. MXI1 thus antagonizes MYC transcriptional activity by competing for MAX. The sequence is that of Max-interacting protein 1 (mxi1) from Danio rerio (Zebrafish).